A 417-amino-acid chain; its full sequence is mRNA cap guanine-N(7) methyltransferase (417 aa).

The region spanning 129-412 (SPIIKLRNFN…LYTVFAFKKV (284 aa)) is the mRNA cap 0 methyltransferase domain. 138-139 (NN) serves as a coordination point for mRNA. 6 residues coordinate S-adenosyl-L-methionine: lysine 142, glycine 160, aspartate 182, aspartate 211, glutamine 237, and tyrosine 242.

Belongs to the class I-like SAM-binding methyltransferase superfamily. mRNA cap 0 methyltransferase family.

It is found in the nucleus. It catalyses the reaction a 5'-end (5'-triphosphoguanosine)-ribonucleoside in mRNA + S-adenosyl-L-methionine = a 5'-end (N(7)-methyl 5'-triphosphoguanosine)-ribonucleoside in mRNA + S-adenosyl-L-homocysteine. Its function is as follows. Responsible for methylating the 5'-cap structure of mRNAs. The protein is mRNA cap guanine-N(7) methyltransferase (ABD1) of Candida glabrata (strain ATCC 2001 / BCRC 20586 / JCM 3761 / NBRC 0622 / NRRL Y-65 / CBS 138) (Yeast).